The following is a 471-amino-acid chain: Putative multidrug resistance protein MdtD (471 aa).

Topologically, residues Met1–Gln11 are periplasmic. Residues Leu12–Ala32 form a helical membrane-spanning segment. Topologically, residues Leu33–His48 are cytoplasmic. Residues Met49 to Ala69 form a helical membrane-spanning segment. Topologically, residues Asp70–Asn76 are periplasmic. The chain crosses the membrane as a helical span at residues Ile77–Thr97. At Leu98 to Leu101 the chain is on the cytoplasmic side. A helical membrane pass occupies residues Leu102–Met124. Residues Lys125–Thr137 lie on the Periplasmic side of the membrane. The helical transmembrane segment at Phe138–Val158 threads the bilayer. Residues Glu159–His164 lie on the Cytoplasmic side of the membrane. A helical transmembrane segment spans residues Trp165 to Met185. Over Pro186 to Asp196 the chain is Periplasmic. A helical membrane pass occupies residues Leu197 to Ser217. Topologically, residues Lys218 to Pro224 are cytoplasmic. A helical membrane pass occupies residues Leu225–Ala245. The Periplasmic segment spans residues Arg246–Thr262. A helical membrane pass occupies residues Phe263–Met283. Topologically, residues Thr284–Pro285 are cytoplasmic. The helical transmembrane segment at Val286–Met306 threads the bilayer. The Periplasmic portion of the chain corresponds to Val307 to Thr341. Residues Leu342–Leu362 traverse the membrane as a helical segment. Residues Gln363–Ser395 lie on the Cytoplasmic side of the membrane. The helical transmembrane segment at Met396–Phe416 threads the bilayer. Residues Gly417–Thr430 lie on the Periplasmic side of the membrane. The helical transmembrane segment at Val431–Ala451 threads the bilayer. Over Arg452–Gln471 the chain is Cytoplasmic.

This sequence belongs to the major facilitator superfamily. TCR/Tet family.

It is found in the cell inner membrane. This chain is Putative multidrug resistance protein MdtD, found in Escherichia coli O127:H6 (strain E2348/69 / EPEC).